Consider the following 140-residue polypeptide: uncharacterized protein (140 aa).

2 helical membrane passes run 33 to 53 (LLYV…KYYF) and 59 to 79 (SLLF…FMGF). Residues 89 to 104 (EAEPDYRKKQESKNQD) are compositionally biased toward basic and acidic residues. The segment at 89–140 (EAEPDYRKKQESKNQDFLKSQSNEPLEYASSSAVELEKEKNTREGLTILESS) is disordered. A compositionally biased stretch (polar residues) spans 105 to 121 (FLKSQSNEPLEYASSSA).

The protein localises to the membrane. This is an uncharacterized protein from Schizosaccharomyces pombe (strain 972 / ATCC 24843) (Fission yeast).